A 252-amino-acid polypeptide reads, in one-letter code: tRNA-cytidine(32) 2-sulfurtransferase (252 aa).

A PP-loop motif motif is present at residues 37–42; the sequence is SGGKDS. [4Fe-4S] cluster is bound by residues cysteine 112, cysteine 115, and cysteine 202.

Belongs to the TtcA family. As to quaternary structure, homodimer. It depends on Mg(2+) as a cofactor. [4Fe-4S] cluster serves as cofactor.

It is found in the cytoplasm. It carries out the reaction cytidine(32) in tRNA + S-sulfanyl-L-cysteinyl-[cysteine desulfurase] + AH2 + ATP = 2-thiocytidine(32) in tRNA + L-cysteinyl-[cysteine desulfurase] + A + AMP + diphosphate + H(+). Its pathway is tRNA modification. Its function is as follows. Catalyzes the ATP-dependent 2-thiolation of cytidine in position 32 of tRNA, to form 2-thiocytidine (s(2)C32). The sulfur atoms are provided by the cysteine/cysteine desulfurase (IscS) system. The chain is tRNA-cytidine(32) 2-sulfurtransferase from Geotalea daltonii (strain DSM 22248 / JCM 15807 / FRC-32) (Geobacter daltonii).